The primary structure comprises 225 residues: Futalosine hydrolase (225 aa).

It belongs to the PNP/UDP phosphorylase family. Futalosine hydrolase subfamily. As to quaternary structure, homotetramer.

It carries out the reaction futalosine + H2O = dehypoxanthine futalosine + hypoxanthine. It participates in quinol/quinone metabolism; menaquinone biosynthesis. With respect to regulation, no enhancing of inhibitory effects are observed with divalent metal ions. Slightly inhibited by hypoxanthine. Its function is as follows. Catalyzes the hydrolysis of futalosine (FL) to dehypoxanthine futalosine (DHFL) and hypoxanthine, a step in the biosynthesis of menaquinone (MK, vitamin K2). Is highly specific to futalosine since it does not accept aminodeoxyfutalosine (AFL), or any structurally related nucleotides and nucleosides as substrate. The protein is Futalosine hydrolase of Thermus thermophilus (strain ATCC 27634 / DSM 579 / HB8).